A 345-amino-acid chain; its full sequence is Arginine N-succinyltransferase (345 aa).

Residue Leu125 coordinates succinyl-CoA. The active-site Proton donor is the His229.

It belongs to the arginine N-succinyltransferase family.

The catalysed reaction is succinyl-CoA + L-arginine = N(2)-succinyl-L-arginine + CoA + H(+). It participates in amino-acid degradation; L-arginine degradation via AST pathway; L-glutamate and succinate from L-arginine: step 1/5. Catalyzes the transfer of succinyl-CoA to arginine to produce N(2)-succinylarginine. The chain is Arginine N-succinyltransferase from Yersinia enterocolitica serotype O:8 / biotype 1B (strain NCTC 13174 / 8081).